A 245-amino-acid polypeptide reads, in one-letter code: MDDARTLLDIKEYPDTEVQKNRVLTLEEWQDKWVSHKIGFHQEQGHKLLKKHLDAFLKGESGLRVFFPLCGKAVEMKWFADRGHSVVGVEISELGIREFFSEQNLSYSEEPITEVPGAKVFKSSAGNISLYCCSIFDLPRVNIGKFDRIWDRGALVAVNPSDRKRYAAVMLSLLRKGFQYLLAVLSYDPTKHAGPPFYVPDAEIKMLFDTKCKIHCLEKVDAFEERHKSWGIDYIFEKLYLLTEK.

S-adenosyl-L-methionine is bound at residue tryptophan 29–phenylalanine 40. Residue phenylalanine 40 coordinates substrate. Residue lysine 58 is modified to N6-acetyllysine. Residues leucine 69, glutamate 90, serine 134–isoleucine 135, and arginine 152 each bind S-adenosyl-L-methionine.

The protein belongs to the class I-like SAM-binding methyltransferase superfamily. TPMT family. Monomer.

The protein localises to the cytoplasm. It catalyses the reaction S-adenosyl-L-methionine + a thiopurine = S-adenosyl-L-homocysteine + a thiopurine S-methylether.. This chain is Thiopurine S-methyltransferase (TPMT), found in Oryctolagus cuniculus (Rabbit).